The sequence spans 78 residues: Putative defensin-like protein 202 (78 aa).

Positions 1–29 are cleaved as a signal peptide; it reads MAKTQNFVCFTAVLLILILVSTEIPMIEG. Disulfide bonds link Cys44/Cys65, Cys49/Cys74, and Cys53/Cys76.

It belongs to the DEFL family.

It is found in the secreted. The sequence is that of Putative defensin-like protein 202 from Arabidopsis thaliana (Mouse-ear cress).